The following is a 94-amino-acid chain: Co-chaperonin GroES (94 aa).

It belongs to the GroES chaperonin family. In terms of assembly, heptamer of 7 subunits arranged in a ring. Interacts with the chaperonin GroEL.

The protein resides in the cytoplasm. In terms of biological role, together with the chaperonin GroEL, plays an essential role in assisting protein folding. The GroEL-GroES system forms a nano-cage that allows encapsulation of the non-native substrate proteins and provides a physical environment optimized to promote and accelerate protein folding. GroES binds to the apical surface of the GroEL ring, thereby capping the opening of the GroEL channel. In Streptococcus equinus (Streptococcus bovis), this protein is Co-chaperonin GroES.